A 793-amino-acid polypeptide reads, in one-letter code: Phenylalanine--tRNA ligase beta subunit (793 aa).

The tRNA-binding domain maps to 40 to 159; the sequence is SKLNTKLVIG…MDEMVGREIS (120 aa). Positions 401–476 constitute a B5 domain; sequence NYDNVYSITL…RLYGYDNIIE (76 aa). Positions 454, 460, 463, and 464 each coordinate Mg(2+). Residues 701–793 form the FDX-ACB domain; it reads SKFQKSTRDI…NLKELKVKVR (93 aa).

It belongs to the phenylalanyl-tRNA synthetase beta subunit family. Type 1 subfamily. In terms of assembly, tetramer of two alpha and two beta subunits. The cofactor is Mg(2+).

The protein localises to the cytoplasm. It catalyses the reaction tRNA(Phe) + L-phenylalanine + ATP = L-phenylalanyl-tRNA(Phe) + AMP + diphosphate + H(+). This chain is Phenylalanine--tRNA ligase beta subunit, found in Mesoplasma florum (strain ATCC 33453 / NBRC 100688 / NCTC 11704 / L1) (Acholeplasma florum).